The following is a 227-amino-acid chain: Thymidylate kinase (227 aa).

ATP is bound at residue 7 to 14 (GIEGSGKT).

This sequence belongs to the thymidylate kinase family.

The enzyme catalyses dTMP + ATP = dTDP + ADP. Its function is as follows. Phosphorylation of dTMP to form dTDP in both de novo and salvage pathways of dTTP synthesis. The sequence is that of Thymidylate kinase from Desulforapulum autotrophicum (strain ATCC 43914 / DSM 3382 / VKM B-1955 / HRM2) (Desulfobacterium autotrophicum).